A 361-amino-acid chain; its full sequence is Chorismate synthase (361 aa).

NADP(+) is bound at residue Arg-48. Residues 125–127 (RSS), 238–239 (NA), Gly-278, 293–297 (KPTSS), and Arg-319 contribute to the FMN site.

Belongs to the chorismate synthase family. In terms of assembly, homotetramer. FMNH2 is required as a cofactor.

The catalysed reaction is 5-O-(1-carboxyvinyl)-3-phosphoshikimate = chorismate + phosphate. The protein operates within metabolic intermediate biosynthesis; chorismate biosynthesis; chorismate from D-erythrose 4-phosphate and phosphoenolpyruvate: step 7/7. In terms of biological role, catalyzes the anti-1,4-elimination of the C-3 phosphate and the C-6 proR hydrogen from 5-enolpyruvylshikimate-3-phosphate (EPSP) to yield chorismate, which is the branch point compound that serves as the starting substrate for the three terminal pathways of aromatic amino acid biosynthesis. This reaction introduces a second double bond into the aromatic ring system. The polypeptide is Chorismate synthase (Vibrio anguillarum (strain ATCC 68554 / 775) (Listonella anguillarum)).